The sequence spans 322 residues: tRNA N6-adenosine threonylcarbamoyltransferase (322 aa).

Fe cation-binding residues include H109 and H113. Substrate-binding positions include 131–135, D164, G177, D181, and N277; that span reads LISGG. A Fe cation-binding site is contributed by D303.

The protein belongs to the KAE1 / TsaD family. Fe(2+) serves as cofactor.

It localises to the cytoplasm. The catalysed reaction is L-threonylcarbamoyladenylate + adenosine(37) in tRNA = N(6)-L-threonylcarbamoyladenosine(37) in tRNA + AMP + H(+). Functionally, required for the formation of a threonylcarbamoyl group on adenosine at position 37 (t(6)A37) in tRNAs that read codons beginning with adenine. Is involved in the transfer of the threonylcarbamoyl moiety of threonylcarbamoyl-AMP (TC-AMP) to the N6 group of A37, together with TsaE and TsaB. TsaD likely plays a direct catalytic role in this reaction. This Mesomycoplasma hyopneumoniae (strain 232) (Mycoplasma hyopneumoniae) protein is tRNA N6-adenosine threonylcarbamoyltransferase.